We begin with the raw amino-acid sequence, 400 residues long: Centrosomal protein CEP57L1 (400 aa).

Phosphoserine is present on serine 45. Coiled coils occupy residues asparagine 47–isoleucine 111 and asparagine 138–alanine 213. Disordered stretches follow at residues arginine 222–serine 261 and methionine 314–glutamine 400. Positions arginine 244–glutamate 258 are enriched in polar residues. The stretch at serine 261–glutamate 345 forms a coiled coil. 2 stretches are compositionally biased toward basic and acidic residues: residues methionine 314–arginine 342 and leucine 391–glutamine 400.

It belongs to the translokin family.

Its subcellular location is the cytoplasm. It localises to the cytoskeleton. The protein localises to the microtubule organizing center. It is found in the centrosome. Functionally, centrosomal protein which may be required for microtubule attachment to centrosomes. The protein is Centrosomal protein CEP57L1 (Cep57l1) of Mus musculus (Mouse).